The sequence spans 547 residues: Chaperonin GroEL (547 aa).

ATP contacts are provided by residues 30 to 33 (TLGP), lysine 51, 87 to 91 (DGTTT), glycine 415, 479 to 481 (NAA), and aspartate 495. The tract at residues 526–547 (KKDEPTPPAAGGGMGGMGGMDF) is disordered. Positions 535–547 (AGGGMGGMGGMDF) are enriched in gly residues.

It belongs to the chaperonin (HSP60) family. In terms of assembly, forms a cylinder of 14 subunits composed of two heptameric rings stacked back-to-back. Interacts with the co-chaperonin GroES.

The protein localises to the cytoplasm. It catalyses the reaction ATP + H2O + a folded polypeptide = ADP + phosphate + an unfolded polypeptide.. Functionally, together with its co-chaperonin GroES, plays an essential role in assisting protein folding. The GroEL-GroES system forms a nano-cage that allows encapsulation of the non-native substrate proteins and provides a physical environment optimized to promote and accelerate protein folding. This is Chaperonin GroEL from Xylella fastidiosa (strain M12).